We begin with the raw amino-acid sequence, 468 residues long: IQ domain-containing protein C (468 aa).

The 30-residue stretch at 6-35 (LVLKVTALQACIRGFLVRRQFQSLRGEYEA) folds into the IQ domain. Disordered stretches follow at residues 113 to 157 (NASS…GPGL), 202 to 245 (EVNQ…PGEP), and 329 to 468 (SHKE…GPAG). Residues 139–150 (QETRDVSRKNDP) show a composition bias toward basic and acidic residues. The segment covering 415 to 426 (SSIERSPSESSH) has biased composition (basic and acidic residues).

This Bos taurus (Bovine) protein is IQ domain-containing protein C (IQCC).